The chain runs to 768 residues: Cullin-3-A (768 aa).

The segment at 677 to 698 is disordered; that stretch reads VAAKQGESDPERKETRQKVDDD. Residues 682-698 are compositionally biased toward basic and acidic residues; sequence GESDPERKETRQKVDDD. The 63-residue stretch at 698–760 folds into the Cullin neddylation domain; sequence DRKHEIEAAI…REYLARTPED (63 aa). A Glycyl lysine isopeptide (Lys-Gly) (interchain with G-Cter in NEDD8) cross-link involves residue Lys-712.

This sequence belongs to the cullin family. Component of multiple BCR (BTB-CUL3-RBX1) E3 ubiquitin-protein ligase complexes formed of cul3, rbx1 and a variable BTB domain-containing protein acting as both, adapter to cullin and substrate recognition subunit. Interacts with btbd6. Post-translationally, neddylated. Attachment of NEDD8 is required for the E3 ubiquitin-protein ligase activity of the SCF-like complex.

It localises to the nucleus. Its pathway is protein modification; protein ubiquitination. Probable core component of cullin-based SCF-like E3 ubiquitin-protein ligase complexes which mediate the ubiquitination and subsequent proteasomal degradation of target proteins. The E3 ubiquitin-protein ligase activity of the complex is dependent on the neddylation of the cullin subunit. Involved in ER-Golgi transport by regulating the size of COPII coats, thereby playing a key role in collagen export, which is required for embryonic stem (ES) cells division. May play a role in the regulation of mittotic entry via ubiquitination of aurka. In Xenopus laevis (African clawed frog), this protein is Cullin-3-A (cul3a).